The sequence spans 269 residues: MKNNYTSLKSPLDEEDELKTDHEIDLEKGPLPEYDSEEESTLPPYSDHALVNNPPNTHRENHSYGTTDNSSPLLIILLISFTSIILFNAPEVCYLKYKDAFFKNYGAAEWTLFGFWCLVCTLALIFLTYFYETWTKAVKVTVISLAKCVKVTAIFLAQCVKACGKGIKHFLKKWENMPMAFSEVFLFNILVGSPRMNLRYIFGDRWGLKCSLADHIIFVVLSILVFIAETVKPGSIRVNLIRKMGYEAKQQVNEYTAVPLREMNSESEA.

A disordered region spans residues 1 to 65 (MKNNYTSLKS…NTHRENHSYG (65 aa)). The span at 19-30 (KTDHEIDLEKGP) shows a compositional bias: basic and acidic residues. The next 3 membrane-spanning stretches (helical) occupy residues 73–95 (LLII…VCYL), 110–132 (WTLF…YFYE), and 206–228 (WGLK…VFIA).

Belongs to the WTF family. As to quaternary structure, homomer. Interacts with other proteins that exhibit high sequence similarity.

It localises to the spore membrane. Its subcellular location is the vacuole membrane. Acts as a suppressor component of the dual wtf meiotic drive system, and can suppress but not confer meiotic drive by compatible poisons. Wtf meiotic drive systems promote unequal transmission of alleles from the parental zygote to progeny spores by encoding a poison and an antidote from the same locus; the poison is trans-acting and forms toxic aggregates in all spores within an ascus, wherease the antidote is spore-specific and targets aggregates for degradation by the vacuole. Meiotic drive by wtf systems therefore lead to poisoning of all progeny that do not inherit the dual poison/antidote allele, or express a compatible antidote. The polypeptide is Meiotic drive suppressor wtf5 (Schizosaccharomyces pombe (strain 972 / ATCC 24843) (Fission yeast)).